The following is a 148-amino-acid chain: Protein Turandot Z (148 aa).

Residues 1 to 23 (MYFAIRLSFVLAVLFCLTGNGSA) form the signal peptide.

The protein belongs to the Turandot family.

It localises to the secreted. In terms of biological role, a humoral factor that may play a role in stress tolerance. This is Protein Turandot Z from Drosophila simulans (Fruit fly).